Reading from the N-terminus, the 471-residue chain is Ribulose bisphosphate carboxylase large chain (471 aa).

An N6,N6,N6-trimethyllysine modification is found at Lys5. Asn114 and Thr164 together coordinate substrate. Lys166 serves as the catalytic Proton acceptor. Lys168 contacts substrate. The Mg(2+) site is built by Lys192, Asp194, and Glu195. N6-carboxylysine is present on Lys192. His285 functions as the Proton acceptor in the catalytic mechanism. Arg286, His318, and Ser370 together coordinate substrate.

This sequence belongs to the RuBisCO large chain family. Type I subfamily. In terms of assembly, heterohexadecamer of 8 large chains and 8 small chains; disulfide-linked. The disulfide link is formed within the large subunit homodimers. Mg(2+) serves as cofactor. In terms of processing, the disulfide bond which can form in the large chain dimeric partners within the hexadecamer appears to be associated with oxidative stress and protein turnover.

The protein resides in the plastid. The protein localises to the chloroplast. The catalysed reaction is 2 (2R)-3-phosphoglycerate + 2 H(+) = D-ribulose 1,5-bisphosphate + CO2 + H2O. It carries out the reaction D-ribulose 1,5-bisphosphate + O2 = 2-phosphoglycolate + (2R)-3-phosphoglycerate + 2 H(+). Its function is as follows. RuBisCO catalyzes two reactions: the carboxylation of D-ribulose 1,5-bisphosphate, the primary event in carbon dioxide fixation, as well as the oxidative fragmentation of the pentose substrate in the photorespiration process. Both reactions occur simultaneously and in competition at the same active site. This Deppea grandiflora protein is Ribulose bisphosphate carboxylase large chain.